Consider the following 326-residue polypeptide: Beta-ketoacyl-[acyl-carrier-protein] synthase III (326 aa).

Residues Cys-120 and His-253 contribute to the active site. The ACP-binding stretch occupies residues Gln-254–Arg-258. Asn-283 is a catalytic residue.

Belongs to the thiolase-like superfamily. FabH family. In terms of assembly, homodimer.

It localises to the cytoplasm. It catalyses the reaction malonyl-[ACP] + acetyl-CoA + H(+) = 3-oxobutanoyl-[ACP] + CO2 + CoA. It participates in lipid metabolism; fatty acid biosynthesis. Functionally, catalyzes the condensation reaction of fatty acid synthesis by the addition to an acyl acceptor of two carbons from malonyl-ACP. Catalyzes the first condensation reaction which initiates fatty acid synthesis and may therefore play a role in governing the total rate of fatty acid production. Possesses both acetoacetyl-ACP synthase and acetyl transacylase activities. Its substrate specificity determines the biosynthesis of branched-chain and/or straight-chain of fatty acids. This is Beta-ketoacyl-[acyl-carrier-protein] synthase III from Ralstonia pickettii (strain 12J).